The primary structure comprises 1698 residues: Protein 4.1 homolog (1698 aa).

The disordered stretch occupies residues 1–31 (MPAEIKPSAPAEPETPTKSKPKSSSSSHGKP). The segment covering 12–27 (EPETPTKSKPKSSSSS) has biased composition (low complexity). The region spanning 32–314 (ALARVTLLDG…EHHTFFRLMT (283 aa)) is the FERM domain. The hydrophilic stretch occupies residues 317-434 (PVSKSKMFPV…KEEKERKERE (118 aa)). Disordered stretches follow at residues 335-361 (GRTQ…SGAR) and 374-710 (EKEK…SDPT). The segment covering 374 to 448 (EKEKVARKSS…EEKKKAEKAA (75 aa)) has biased composition (basic and acidic residues). The span at 449 to 461 (KAALAAGAAAGAA) shows a compositional bias: low complexity. Phosphoserine occurs at positions 471, 474, and 478. Basic and acidic residues predominate over residues 499–514 (KDGKDKSGKDKDKEVG). Residues 562–571 (DGNTSPTRKS) are compositionally biased toward polar residues. At Ser566 the chain carries Phosphoserine. A compositionally biased stretch (basic and acidic residues) spans 579–589 (YDQDPNSRKSG). Positions 594-603 (EQLSPTSQQK) are enriched in polar residues. The span at 618–627 (ALKETAEKLK) shows a compositional bias: basic and acidic residues. Residues Ser659 and Ser687 each carry the phosphoserine modification. The segment covering 684–696 (RSYSPTKGPQGYS) has biased composition (polar residues). Residue Thr689 is modified to Phosphothreonine. 4 positions are modified to phosphoserine: Ser697, Ser1398, Ser1401, and Ser1402. A C-terminal (CTD) region spans residues 1286-1698 (GEIVQVDPND…EKIEIQQQTQ (413 aa)). Thr1407 bears the Phosphothreonine mark. The segment covering 1509–1532 (LGKNAKTEQLEEKTVATTRTHDPN) has biased composition (basic and acidic residues). Positions 1509-1599 (LGKNAKTEQL…SPLFTTSATT (91 aa)) are disordered. Polar residues predominate over residues 1533-1554 (KQQQRVVTQEVKTTATVTSGDQ). Over residues 1561–1571 (VSSTSSGDSGT) the composition is skewed to low complexity. Residues 1584-1599 (RTDNQKSPLFTTSATT) are compositionally biased toward polar residues. Phosphoserine is present on Ser1590.

At onset of germ band retraction, expression is seen in epidermis, hindgut and foregut. During retraction, expression extends to tracheal branches and salivary glands.

Its subcellular location is the cell junction. The protein localises to the septate junction. Functionally, an integral component of the septate junction. May play a role in cell-cell interactions that are necessary for proper development. Vital for embryonic development. This Drosophila melanogaster (Fruit fly) protein is Protein 4.1 homolog (cora).